The following is a 314-amino-acid chain: Homoserine O-acetyltransferase (314 aa).

The Acyl-thioester intermediate role is filled by C142. Residues K163 and S192 each contribute to the substrate site. H235 (proton acceptor) is an active-site residue. The active site involves E237. Residue R249 coordinates substrate.

This sequence belongs to the MetA family.

The protein resides in the cytoplasm. The enzyme catalyses L-homoserine + acetyl-CoA = O-acetyl-L-homoserine + CoA. It participates in amino-acid biosynthesis; L-methionine biosynthesis via de novo pathway; O-acetyl-L-homoserine from L-homoserine: step 1/1. Functionally, transfers an acetyl group from acetyl-CoA to L-homoserine, forming acetyl-L-homoserine. This is Homoserine O-acetyltransferase from Desulfovibrio desulfuricans (strain ATCC 27774 / DSM 6949 / MB).